Here is a 791-residue protein sequence, read N- to C-terminus: uncharacterized protein (791 aa).

The helical transmembrane segment at L10–Y30 threads the bilayer. Over residues N56 to K76 the composition is skewed to basic and acidic residues. The segment at N56–S175 is disordered. Over residues P77–P97 the composition is skewed to pro residues. A compositionally biased stretch (basic and acidic residues) spans P98–P124. The segment covering K125–E139 has biased composition (pro residues).

The protein to U.parvum UU044.

Its subcellular location is the membrane. This is an uncharacterized protein from Ureaplasma parvum serovar 3 (strain ATCC 700970).